A 235-amino-acid polypeptide reads, in one-letter code: Sugar fermentation stimulation protein homolog (235 aa).

Belongs to the SfsA family.

This is Sugar fermentation stimulation protein homolog from Azotobacter vinelandii (strain DJ / ATCC BAA-1303).